The chain runs to 218 residues: Small ribosomal subunit protein uS3c (218 aa).

Residues 43–118 (IKDYVKKNKK…RLNIAITRIE (76 aa)) enclose the KH type-2 domain.

The protein belongs to the universal ribosomal protein uS3 family. As to quaternary structure, part of the 30S ribosomal subunit.

The protein localises to the plastid. It localises to the chloroplast. The polypeptide is Small ribosomal subunit protein uS3c (rps3) (Phalaenopsis aphrodite subsp. formosana (Moth orchid)).